A 327-amino-acid polypeptide reads, in one-letter code: DNA-directed RNA polymerase subunit alpha (327 aa).

Positions 1–233 (MVREKVKVST…NLFIPFLHVE (233 aa)) are alpha N-terminal domain (alpha-NTD). Residues 264–327 (TKELAFQYIF…KKILDILEKK (64 aa)) are alpha C-terminal domain (alpha-CTD).

Belongs to the RNA polymerase alpha chain family. In terms of assembly, in plastids the minimal PEP RNA polymerase catalytic core is composed of four subunits: alpha, beta, beta', and beta''. When a (nuclear-encoded) sigma factor is associated with the core the holoenzyme is formed, which can initiate transcription.

It localises to the plastid. It is found in the chloroplast. It carries out the reaction RNA(n) + a ribonucleoside 5'-triphosphate = RNA(n+1) + diphosphate. Its function is as follows. DNA-dependent RNA polymerase catalyzes the transcription of DNA into RNA using the four ribonucleoside triphosphates as substrates. In Capsella bursa-pastoris (Shepherd's purse), this protein is DNA-directed RNA polymerase subunit alpha.